Consider the following 269-residue polypeptide: NAD kinase (269 aa).

Asp45 functions as the Proton acceptor in the catalytic mechanism. NAD(+) contacts are provided by residues 45-46 (DG), 122-123 (NE), Arg149, Asp151, and Ala186.

The protein belongs to the NAD kinase family. A divalent metal cation serves as cofactor.

It localises to the cytoplasm. The catalysed reaction is NAD(+) + ATP = ADP + NADP(+) + H(+). Functionally, involved in the regulation of the intracellular balance of NAD and NADP, and is a key enzyme in the biosynthesis of NADP. Catalyzes specifically the phosphorylation on 2'-hydroxyl of the adenosine moiety of NAD to yield NADP. The chain is NAD kinase from Staphylococcus haemolyticus (strain JCSC1435).